The chain runs to 472 residues: Siroheme synthase (472 aa).

The precorrin-2 dehydrogenase /sirohydrochlorin ferrochelatase stretch occupies residues 1–203; the sequence is MNYLPIFIDI…GKIQEAKADL (203 aa). NAD(+) is bound by residues 22–23 and 43–44; these read DI and KS. Serine 128 is subject to Phosphoserine. Residues 216–472 are uroporphyrinogen-III C-methyltransferase; it reads GEVYLVGGGP…SSKKSYLFGG (257 aa). Proline 225 contacts S-adenosyl-L-methionine. Catalysis depends on aspartate 248, which acts as the Proton acceptor. Lysine 270 (proton donor) is an active-site residue. Residues 301–303, isoleucine 306, 331–332, methionine 383, and glycine 412 each bind S-adenosyl-L-methionine; these read GGD and TA.

In the N-terminal section; belongs to the precorrin-2 dehydrogenase / sirohydrochlorin ferrochelatase family. The protein in the C-terminal section; belongs to the precorrin methyltransferase family.

It catalyses the reaction uroporphyrinogen III + 2 S-adenosyl-L-methionine = precorrin-2 + 2 S-adenosyl-L-homocysteine + H(+). The catalysed reaction is precorrin-2 + NAD(+) = sirohydrochlorin + NADH + 2 H(+). It carries out the reaction siroheme + 2 H(+) = sirohydrochlorin + Fe(2+). Its pathway is cofactor biosynthesis; adenosylcobalamin biosynthesis; precorrin-2 from uroporphyrinogen III: step 1/1. It participates in cofactor biosynthesis; adenosylcobalamin biosynthesis; sirohydrochlorin from precorrin-2: step 1/1. The protein operates within porphyrin-containing compound metabolism; siroheme biosynthesis; precorrin-2 from uroporphyrinogen III: step 1/1. It functions in the pathway porphyrin-containing compound metabolism; siroheme biosynthesis; siroheme from sirohydrochlorin: step 1/1. Its pathway is porphyrin-containing compound metabolism; siroheme biosynthesis; sirohydrochlorin from precorrin-2: step 1/1. In terms of biological role, multifunctional enzyme that catalyzes the SAM-dependent methylations of uroporphyrinogen III at position C-2 and C-7 to form precorrin-2 via precorrin-1. Then it catalyzes the NAD-dependent ring dehydrogenation of precorrin-2 to yield sirohydrochlorin. Finally, it catalyzes the ferrochelation of sirohydrochlorin to yield siroheme. This chain is Siroheme synthase, found in Ruthia magnifica subsp. Calyptogena magnifica.